The primary structure comprises 93 residues: Cell division topological specificity factor (93 aa).

It belongs to the MinE family.

Prevents the cell division inhibition by proteins MinC and MinD at internal division sites while permitting inhibition at polar sites. This ensures cell division at the proper site by restricting the formation of a division septum at the midpoint of the long axis of the cell. The protein is Cell division topological specificity factor of Syntrophus aciditrophicus (strain SB).